Consider the following 646-residue polypeptide: Cytochrome b translation regulator cbp8 (646 aa).

As to quaternary structure, component of a complex, at least composed of cbp7 and cbp8.

It localises to the mitochondrion. Its function is as follows. Translation factor for cob1/cytochrome b; plays a role in cob1 mRNA stabilization and required for correct folding of the protein. The polypeptide is Cytochrome b translation regulator cbp8 (Schizosaccharomyces pombe (strain 972 / ATCC 24843) (Fission yeast)).